A 427-amino-acid polypeptide reads, in one-letter code: Ectoine TRAP transporter large permease protein TeaC (427 aa).

12 consecutive transmembrane segments (helical) span residues 13 to 35, 49 to 69, 79 to 99, 103 to 123, 147 to 167, 172 to 192, 216 to 236, 237 to 257, 273 to 293, 320 to 340, 356 to 376, and 400 to 420; these read LLLGFPMMIPLATASIIGFFMMF, MAGIRPASLIAVPMFILAADI, LINMVMAFIGHIKGGLAVSTA, TLFGAVSGSTQATVVAVGSPL, IAFLIPPSIGMIIYGIISGTS, FIAGIGPGLMILVMFAIYCVI, LALWPLGFPVIIIGGIYGGIF, SPTEAAAACVLYAVLLEFVVF, GLITAVVFILVAVGNSFSWII, ICVAFFVACMFVDPIVVILVL, VLVGILITLQVAIGSATPPFG, and FIFMLVLAAALLILFPQIALF.

It belongs to the TRAP transporter large permease family. In terms of assembly, the complex comprises the extracytoplasmic solute receptor protein TeaA, and the two transmembrane proteins TeaB and TeaC.

The protein resides in the cell inner membrane. In terms of biological role, part of the tripartite ATP-independent periplasmic (TRAP) transport system TeaABC involved in the uptake of ectoine and hydroxyectoine in response to osmotic upshock. Probably functions as a recovery system for synthesized ectoine that leaks out of the cell. This is Ectoine TRAP transporter large permease protein TeaC (teaC) from Halomonas elongata (strain ATCC 33173 / DSM 2581 / NBRC 15536 / NCIMB 2198 / 1H9).